Reading from the N-terminus, the 390-residue chain is MVQVVEAFGKPHVNVGTIGHVDHGKTTLTAAITKHYGNFVAYDQIDKAPEERKRGITIATAHVEYQTEKRHYAHVDCPGHADYVKNMIVGAAQMDAAILVVSGVDGPMPQTREHILLAKQVGVGYIVVYINKADVSDPDMIGLVEMEVRELLSKYGFPGDEVPVVIGSALKALEDDDGEYGKKSIDKLMERLDDYVEVPPRSVDLPFLLPIEDVFSISGRGTVVTGRIEKGEIKIGDEIEIIGLKATQKTTCTGVEMFKKLLEKGSAGLNVGILLRGTKREEVERGQVLAKPGTITPHRKFKAEVYILKKEEGGRHTPFFANYQPQFYLRTTDVTGSIKLLEGKEMVMPGDNVSIEVELQVPIAMDKGLRFAIREGGRTVGSGVVSEILE.

One can recognise a tr-type G domain in the interval 10 to 201 (KPHVNVGTIG…LDDYVEVPPR (192 aa)). The interval 19 to 26 (GHVDHGKT) is G1. 19 to 26 (GHVDHGKT) provides a ligand contact to GTP. Thr26 contributes to the Mg(2+) binding site. A G2 region spans residues 55–59 (GITIA). The tract at residues 76-79 (DCPG) is G3. GTP is bound by residues 76–80 (DCPGH) and 131–134 (NKAD). A G4 region spans residues 131–134 (NKAD). The segment at 168–170 (SAL) is G5.

The protein belongs to the TRAFAC class translation factor GTPase superfamily. Classic translation factor GTPase family. EF-Tu/EF-1A subfamily. Monomer.

Its subcellular location is the cytoplasm. The enzyme catalyses GTP + H2O = GDP + phosphate + H(+). Its function is as follows. GTP hydrolase that promotes the GTP-dependent binding of aminoacyl-tRNA to the A-site of ribosomes during protein biosynthesis. The polypeptide is Elongation factor Tu 2 (Wolbachia sp. subsp. Brugia malayi (strain TRS)).